Consider the following 390-residue polypeptide: Calcium-binding and spermatid-specific protein 1 (390 aa).

Disordered regions lie at residues 1–23 (MAED…TPTE), 82–109 (ASLK…KESI), and 146–225 (TIDA…TIPD). Positions 162-174 (ETQEDSSANDEDT) are enriched in acidic residues. A compositionally biased stretch (low complexity) spans 184 to 193 (TDVSSSTSSD). Phosphoserine occurs at positions 251 and 267. Thr280 carries the post-translational modification Phosphothreonine; by CK2. A Phosphoserine modification is found at Ser312. A compositionally biased stretch (basic and acidic residues) spans 330-344 (EPHVDTKNSPEKDAA). The segment at 330–390 (EPHVDTKNSP…LKEEPDELMM (61 aa)) is disordered. Residues Ser346, Ser356, Ser371, and Ser375 each carry the phosphoserine modification. Residues 346–364 (SVTNVTEEFPSVTSVVEQS) show a composition bias toward polar residues.

In terms of tissue distribution, expressed in seminiferous tubules of the testis in step 10 spermatids (stage X), subsequently increasing to reach maximal levels of step 18 elongated spermatids (stage VI) (at protein level). Strongly expressed in testis. Weakly expressed in olfactory epithelium. Expressed in spermatids of seminiferous tubules at steps 4-14 (stages IV to XIV of the seminiferous epithelium classification).

It localises to the cytoplasm. It is found in the mitochondrion inner membrane. The protein resides in the cell projection. The protein localises to the cilium. Its subcellular location is the flagellum. It localises to the cytoplasmic vesicle. It is found in the secretory vesicle. The protein resides in the acrosome. Its function is as follows. Calcium-binding protein. Essential for maintaining the structural integrity of the sperm flagella. The polypeptide is Calcium-binding and spermatid-specific protein 1 (Cabs1) (Rattus norvegicus (Rat)).